The sequence spans 3491 residues: MSGPRSRTTSRRTPVRIGAVVVASSTSELLDGLAAVADGRPHASVVRGVARPSAPVVFVFPGQGAQWAGMAGELLGESRVFAAAMDACARAFEPVTDWTLAQVLDSPEQSRRVEVVQPALFAVQTSLAALWRSFGVTPDAVVGHSIGELAAAHVCGAAGAADAARAAALWSREMIPLVGNGDMAAVALSADEIEPRIARWDDDVVLAGVNGPRSVLLTGSPEPVARRVQELSAEGVRAQVINVSMAAHSAQVDDIAEGMRSALAWFAPGGSEVPFYASLTGGAVDTRELVADYWRRSFRLPVRFDEAIRSALEVGPGTFVEASPHPVLAAALQQTLDAEGSSAAVVPTLQRGQGGMRRFLLAAAQAFTGGVAVDWTAAYDDVGPNPALCRSSRRPRRKTSRPSPASTGTRHRTCCERLLAVVNGETAALAGREADAEATFRELGLDSVLAAQLRAKVSAAIGREVNIALLYDHPTPRALAEALAAGTEVAQRETRARTNEAAPGEPVAVVAMACRLPGGVSTPEEFWELLSEGRDAVAGLPTDRGWDLDSLFHPDPTRSGTAHQRGGGFLTEATAFDPAFFGMSPREALAVDPQQRLMLELSWEVLERAGIPPTSLQASPTGVFVGLIPQEYGPRLAEGGEGVEGYLMTGTTTSVASGRIAYTLGLEGPAISVDTACSSSLVAVHLACQSLRRGESSLAMAGGVTVMPTPGMLVDFSRMNSLAPDGRCKAFSAGANGFGMAEGAGMLLLERLSDARRNGHPVLAVLRGTAVNSDGASNGLSAPNGRAQVRVIQQALAESGLGPADIDAVEAHGTGTRLGDPIEARALFEAYGRDREQPLHLGSVKSNLGHTQAAAGVAGVIKMVLAMRAGTLPRTLHASERSKEIDWSSGAISLLDEPEPWPAGARPRRAGVSSFGISGTNAHAIIEEAPQVVEGERVEAGDVVAPWVLSASSAEGLRAQAARLAAHLREHPGQDPRDIAYSLATGRAALPHRAAFAPVDESAALRVLDGLATGNADGAAVGTSRAQQRAVFVFPGQGWQWAGMAVDLLDTSPVFAAALRECADALEPHLDFEVIPFLRAEAARREQDAALSTERVDVVQPVMFAVMVSLASMWRAHGVEPAAVIGHSQGEIAAACVAGALSLDDAARVVALRSRVIATMPGNKGMASIAAPAGEVRARIGDRVEIAAVNGPRSVVVAGDSDELDRLVASCTTECIRAKRLAVDYASHSSHVETIRDALHAELGEDFHPLPGFVPFFSTVTGRWTQPDELDAGYWYRNLRRTVRFADAVRALAEQGYRTFLEVSAHPILTAAIEEIGDGSGADLSAIHSLRRGDGSLADFGEALSRAFAAGVAVDWESVHLGTGARRVPLPTYPFQRERVWLEPKPVARRSTEVDEVSALRYRIEWRPTGAGEPARLDGTWLVAKYAGTADETSTAAREALESAGARVRELVVDARCGRDELAERLRSVGEVAGVLSLLAVDEAEPEEAPLALASLADTLSLVQAMVSAELGCPLWTVTESAVATGPFERVRNAAHGALWGVGRVIALENPAVWGGLVDVPAGSVAELARHLAAVVSGGAGEDQLALRADGVYGRRWVRAAAPATDDEWKPTGTVLVTGGTGGVGGQIARWLARRGAPHLLLVSRSGPDADGAGELVAELEALGARTTVAACDVTDRESVRELLGGIGDDVPLSAVFHAAATLDDGTVDTLTGERIERASRAKVLGARNLHELTRELDLTAFVLFSSFASAFGAPGLGGYAPGNAYLDGLAQQRRSDGLPATAVAWGTWAGSGMAEGAVADRFRRHGVIEMPPETACRALQNALDRAEVCPIVIDVRWDRFLLAYTAQRPTRLFDEIDDARRAAPQAPAEPRVGALASLPAPEREEALFELVRSHAAAVLGHASAERVPADQAFAELGVDSLSALELRNRLGAATGVRLPTTTVFDHPDVRTLAAHLAAELGGATGAEQAAPATTAPVDEPIAIVGMACRLPGEVDSPERLWELITSGRDSAAEVPDDRGWVPDELMASDAAGTRAHGNFMAGAGDFDAAFFGISPREALAMDPQQRQALETTWEALESAGIPPETLRGSDTGVFVGMSHQGYATGRPRPEDGVDGYLLTGNTASVASGRIAYVLGLEGPALTVDTACSSSLVALHTACGSLRDGDCGLAVAGGVSVMAGPEVFTEFSRQGALSPDGRCKPFSDEADGFGLGEGSAFVVLQRLSDARREGRRVLGVVAGSAVNQDGASNGLSAPSGVAQQRVIRRAWARAGITGADVAVVEAHGTGTRLGDPVEASALLATYGKSRGSSGPVLLGSVKSNIGHAQAAAGVAGVIKVLLGLERGVVPPMLCRGERSGLIDWSSGEIELADGVREWSPAADGVRRAGVSAFGVSGTNAHVIIAEPPEPEPVPQPRRMLPATGVVPVVLSARTGAALRAQAGRLADHLAAHPGIAPADVSWTMARARQHFEERAAVLAADTAEAVHRLRAVADGAVVPGVVTGSASDGGSVFVFPGQGAQWEGMARELLPVPVFAESIAECDAVLSEVAGFSVSEVLEPRPDAPSLERVDVVQPVLFAVMVSLARLWRACGAVPSAVIGHSQGEIAAAVVAGALSLEDGMRVVARRSRAVRAVAGRGSMLSVRGGRSDVEKLLADDSWTGRLEVAAVNGPDAVVVAGDAQAAREFLEYCEGVGIRARAIPVDYASHTAHVEPVRDELVQALAGITPRRAEVPFFSTLTGDFLDGTELDAGYWYRNLRHPVEFHSAVQALTDQGYATFIEVSPHPVLASSVQETLDDAESDAAVLGTLERDAGDADRFLTALADAHTRGVAVDWEAVLGRAGLVDLPGYPFQGKRFWLLPDRTTPRDELDGWFYRVDWTEVPRSEPAALRGRWLVVVPEGHEEDGWTVEVRSALAEAGAEPEVTRGVGGLVGDCAGVVSLLALEGDGAVQTLVLVRELDAEGIDAPLWTVTFGAVDAGSPVARPDQAKLWGLGQVASLERGPRWTGLVDLPHMPDPELRGRLTAVLAGSEDQVAVRADAVRARRLSPAHVTATSEYAVPGGTILVTGGTAGLGAEVARWLAGRGAEHLALVSRRGPDTEGVGDLTAELTRLGARVSVHACDVSSREPVRELVHGLIEQGDVVRGVVHAAGLPQQVAINDMDEAAFDEVVAAKAGGAVHLDELCSDAELFLLFSSGAGVWGSARQGAYAAGNAFLDAFARHRRGRGLPATSVAWGLWAAGGMTGDEEAVSFLRERGVRAMPVPRALAALDRVLASGETAVVVTDVDWPAFAESYTAARPRPLLDRIVTTAPSERAGEPETESLRDRLAGLPRAERTAELVRLVRTSTATVLGHDDPKAVRATTPFKELGFDSLAAVRLRNLLNAATGLRLPSTLVFDHPNASAVAGFLDAELGTEVRGEAPSALAGLDALEGALPEVPATEREELVQRLERMLAALRPVAQAADASGTGANPSGDDLGEAGVDELLEALGRELDGD.

The interval 1 to 484 is loading domain; that stretch reads MSGPRSRTTS…TPRALAEALA (484 aa). Residues 57-372 are acyltransferase 1; the sequence is VFVFPGQGAQ…AAQAFTGGVA (316 aa). Catalysis depends on serine 145, which acts as the Acyl-ester intermediate; for acyltransferase 1 activity. The tract at residues 386 to 410 is disordered; sequence PALCRSSRRPRRKTSRPSPASTGTR. A compositionally biased stretch (basic residues) spans 391–400; that stretch reads SSRRPRRKTS. Residues 412 to 487 enclose the Carrier 1 domain; the sequence is RTCCERLLAV…ALAEALAAGT (76 aa). Serine 447 carries the post-translational modification O-(pantetheine 4'-phosphoryl)serine. The 425-residue stretch at 504 to 928 folds into the Ketosynthase family 3 (KS3) 1 domain; sequence GEPVAVVAMA…GTNAHAIIEE (425 aa). Module regions lie at residues 507 to 1958 and 1982 to 3404; these read VAVV…AHLA and IAIV…GFLD. Residue cysteine 677 is the Acyl-thioester intermediate; for beta-ketoacyl synthase 1 activity of the active site. Active-site for beta-ketoacyl synthase 1 activity residues include histidine 812 and histidine 850. The tract at residues 1031-1352 is acyltransferase 2; the sequence is VFVFPGQGWQ…ALSRAFAAGV (322 aa). Catalysis depends on serine 1128, which acts as the Acyl-ester intermediate; for acyltransferase 2 activity. The beta-ketoacyl reductase 1 stretch occupies residues 1613-1790; it reads GTVLVTGGTG…ATAVAWGTWA (178 aa). NADP(+) is bound by residues 1621–1624, 1644–1647, 1673–1674, lysine 1723, and 1745–1746; these read TGGV, SRSG, DV, and FS. Residue tyrosine 1760 is the For beta-ketoacyl reductase 1 activity of the active site. The 76-residue stretch at 1886-1961 folds into the Carrier 2 domain; the sequence is EALFELVRSH…TLAAHLAAEL (76 aa). Serine 1921 carries the post-translational modification O-(pantetheine 4'-phosphoryl)serine. The Ketosynthase family 3 (KS3) 2 domain occupies 1979-2402; sequence DEPIAIVGMA…GTNAHVIIAE (424 aa). Cysteine 2148 serves as the catalytic Acyl-thioester intermediate; for beta-ketoacyl synthase 2 activity. Catalysis depends on for beta-ketoacyl synthase 2 activity residues histidine 2283 and histidine 2323. The tract at residues 2508–2827 is acyltransferase 3; the sequence is VFVFPGQGAQ…LADAHTRGVA (320 aa). The Acyl-ester intermediate; for acyltransferase 3 activity role is filled by serine 2598. Residues 3057-3233 are beta-ketoacyl reductase 2; sequence GTILVTGGTA…ATSVAWGLWA (177 aa). Residues 3065–3068, 3088–3091, 3117–3118, lysine 3168, and 3188–3189 each bind NADP(+); these read TAGL, SRRG, DV, and FS. Tyrosine 3203 functions as the For beta-ketoacyl reductase 2 activity in the catalytic mechanism. One can recognise a Carrier 3 domain in the interval 3329–3407; sequence ERTAELVRLV…AVAGFLDAEL (79 aa). Serine 3367 is modified (O-(pantetheine 4'-phosphoryl)serine). A disordered region spans residues 3456–3491; that stretch reads QAADASGTGANPSGDDLGEAGVDELLEALGRELDGD. The span at 3471 to 3481 shows a compositional bias: acidic residues; the sequence is DLGEAGVDELL.

Homodimer. Erythronolide synthase is composed of EryAI, EryAII and EryAIII multimodular (2 modules) polypeptides each coding for a functional synthase subunit which participates in 2 of the six FAS-like elongation steps required for formation of the polyketide. Module 1, 2, 3, 4, 5, and 6 participating in biosynthesis steps 1, 2, 3, 4, 5, and 6, respectively. Pantetheine 4'-phosphate serves as cofactor.

The enzyme catalyses 6 (S)-methylmalonyl-CoA + propanoyl-CoA + 6 NADPH + 12 H(+) = 6-deoxyerythronolide B + 6 CO2 + 6 NADP(+) + 7 CoA + H2O. It functions in the pathway antibiotic biosynthesis; erythromycin biosynthesis. Its function is as follows. Involved in the biosynthesis of antibiotic erythromycin via the biosynthesis of its aglycone precursor, 6-deoxyerythronolide B (6-dEB). The chain is Erythronolide synthase EryA1 (eryA) from Saccharopolyspora erythraea (Streptomyces erythraeus).